A 432-amino-acid chain; its full sequence is 3-phosphoshikimate 1-carboxyvinyltransferase (432 aa).

Lys-23, Ser-24, and Arg-28 together coordinate 3-phosphoshikimate. Residue Lys-23 participates in phosphoenolpyruvate binding. Residues Gly-99 and Arg-127 each contribute to the phosphoenolpyruvate site. 3-phosphoshikimate contacts are provided by Ser-172, Ser-173, Gln-174, Ser-200, Asp-317, Asn-341, and Lys-345. Gln-174 serves as a coordination point for phosphoenolpyruvate. Asp-317 serves as the catalytic Proton acceptor. Phosphoenolpyruvate-binding residues include Arg-349, Arg-391, and Lys-416.

This sequence belongs to the EPSP synthase family. In terms of assembly, monomer.

The protein resides in the cytoplasm. It catalyses the reaction 3-phosphoshikimate + phosphoenolpyruvate = 5-O-(1-carboxyvinyl)-3-phosphoshikimate + phosphate. It functions in the pathway metabolic intermediate biosynthesis; chorismate biosynthesis; chorismate from D-erythrose 4-phosphate and phosphoenolpyruvate: step 6/7. Functionally, catalyzes the transfer of the enolpyruvyl moiety of phosphoenolpyruvate (PEP) to the 5-hydroxyl of shikimate-3-phosphate (S3P) to produce enolpyruvyl shikimate-3-phosphate and inorganic phosphate. This chain is 3-phosphoshikimate 1-carboxyvinyltransferase, found in Blochmanniella pennsylvanica (strain BPEN).